The chain runs to 467 residues: ATP-dependent rRNA helicase rrp3 (467 aa).

The interval 1 to 48 is disordered; sequence MPGVKKRKVAREAPAPAPAQESDVESSTPEQTQEPEAQEQEQEEGQSK. The Q motif signature appears at 48-76; it reads KTFKELGIIEQLCEACETMGYKAPTPIQR. The Helicase ATP-binding domain maps to 79-250; the sequence is IPLALKGRDL…RASLSNPLRV (172 aa). 92-99 is a binding site for ATP; the sequence is AETGSGKT. The DEAD box signature appears at 198–201; it reads DEAD. One can recognise a Helicase C-terminal domain in the interval 262–422; the sequence is TLLQSYLFIP…EYDCPKDEVM (161 aa). A disordered region spans residues 439 to 467; the sequence is MKDYNEKKGSRGKKFGGKRSRDEMDQEEG.

This sequence belongs to the DEAD box helicase family. DDX47/RRP3 subfamily. Interacts with the SSU processome.

The protein resides in the nucleus. The catalysed reaction is ATP + H2O = ADP + phosphate + H(+). In terms of biological role, ATP-dependent rRNA helicase required for pre-ribosomal RNA processing. Involved in the maturation of the 35S-pre-rRNA and to its cleavage to mature 18S rRNA. The sequence is that of ATP-dependent rRNA helicase rrp3 from Aspergillus niger (strain ATCC MYA-4892 / CBS 513.88 / FGSC A1513).